The following is a 290-amino-acid chain: Ribonuclease HIII (290 aa).

The RNase H type-2 domain occupies Leu78–Ala290. Residues Asp84, Glu85, and Asp187 each contribute to the a divalent metal cation site.

It belongs to the RNase HII family. RnhC subfamily. Mn(2+) serves as cofactor. The cofactor is Mg(2+).

It localises to the cytoplasm. It carries out the reaction Endonucleolytic cleavage to 5'-phosphomonoester.. Its function is as follows. Endonuclease that specifically degrades the RNA of RNA-DNA hybrids. This Streptococcus pneumoniae (strain P1031) protein is Ribonuclease HIII.